The sequence spans 241 residues: Type III pantothenate kinase (241 aa).

Asp-6–Lys-13 serves as a coordination point for ATP. A substrate-binding site is contributed by Gly-94–Arg-97. Asp-96 (proton acceptor) is an active-site residue. Residue Asp-117 participates in K(+) binding. An ATP-binding site is contributed by Thr-120. Thr-172 provides a ligand contact to substrate.

It belongs to the type III pantothenate kinase family. In terms of assembly, homodimer. The cofactor is NH4(+). It depends on K(+) as a cofactor.

Its subcellular location is the cytoplasm. The catalysed reaction is (R)-pantothenate + ATP = (R)-4'-phosphopantothenate + ADP + H(+). It functions in the pathway cofactor biosynthesis; coenzyme A biosynthesis; CoA from (R)-pantothenate: step 1/5. Functionally, catalyzes the phosphorylation of pantothenate (Pan), the first step in CoA biosynthesis. The sequence is that of Type III pantothenate kinase from Flavobacterium psychrophilum (strain ATCC 49511 / DSM 21280 / CIP 103535 / JIP02/86).